The primary structure comprises 242 residues: tRNA (guanine-N(1)-)-methyltransferase (242 aa).

S-adenosyl-L-methionine-binding positions include Gly-114 and 134–139 (IGDFVL). Residues 223–233 (RRDLLPEHSKN) show a composition bias toward basic and acidic residues. Residues 223–242 (RRDLLPEHSKNNPEQTNKLS) are disordered.

This sequence belongs to the RNA methyltransferase TrmD family. Homodimer.

It localises to the cytoplasm. It carries out the reaction guanosine(37) in tRNA + S-adenosyl-L-methionine = N(1)-methylguanosine(37) in tRNA + S-adenosyl-L-homocysteine + H(+). In terms of biological role, specifically methylates guanosine-37 in various tRNAs. The protein is tRNA (guanine-N(1)-)-methyltransferase of Rhodopirellula baltica (strain DSM 10527 / NCIMB 13988 / SH1).